Reading from the N-terminus, the 502-residue chain is Glycerol kinase (502 aa).

Position 14 (Thr14) interacts with ADP. Residues Thr14, Thr15, and Ser16 each contribute to the ATP site. Sn-glycerol 3-phosphate is bound at residue Thr14. Residue Arg18 participates in ADP binding. Residues Arg84, Glu85, Tyr136, and Asp246 each contribute to the sn-glycerol 3-phosphate site. Glycerol contacts are provided by Arg84, Glu85, Tyr136, Asp246, and Gln247. Thr268 and Gly311 together coordinate ADP. The ATP site is built by Thr268, Gly311, Gln315, and Gly412. Positions 412 and 416 each coordinate ADP.

This sequence belongs to the FGGY kinase family. Homotetramer and homodimer (in equilibrium). Heterodimer with EIIA-Glc. Binds 1 zinc ion per glycerol kinase EIIA-Glc dimer. The zinc ion is important for dimerization.

The enzyme catalyses glycerol + ATP = sn-glycerol 3-phosphate + ADP + H(+). It participates in polyol metabolism; glycerol degradation via glycerol kinase pathway; sn-glycerol 3-phosphate from glycerol: step 1/1. Activity of this regulatory enzyme is affected by several metabolites. Allosterically and non-competitively inhibited by fructose 1,6-bisphosphate (FBP) and unphosphorylated phosphocarrier protein EIIA-Glc (III-Glc), an integral component of the bacterial phosphotransferase (PTS) system. Functionally, key enzyme in the regulation of glycerol uptake and metabolism. Catalyzes the phosphorylation of glycerol to yield sn-glycerol 3-phosphate. In Escherichia coli O7:K1 (strain IAI39 / ExPEC), this protein is Glycerol kinase.